A 1175-amino-acid polypeptide reads, in one-letter code: DNA-directed RNA polymerase subunit beta (1175 aa).

The disordered stretch occupies residues 1142-1175 (PMELSGSDDDEFDQAGASLGINLSRDERSDADIA). Residues 1165 to 1175 (SRDERSDADIA) are compositionally biased toward basic and acidic residues.

Belongs to the RNA polymerase beta chain family. As to quaternary structure, the RNAP catalytic core consists of 2 alpha, 1 beta, 1 beta' and 1 omega subunit. When a sigma factor is associated with the core the holoenzyme is formed, which can initiate transcription.

It catalyses the reaction RNA(n) + a ribonucleoside 5'-triphosphate = RNA(n+1) + diphosphate. DNA-dependent RNA polymerase catalyzes the transcription of DNA into RNA using the four ribonucleoside triphosphates as substrates. The chain is DNA-directed RNA polymerase subunit beta from Corynebacterium diphtheriae (strain ATCC 700971 / NCTC 13129 / Biotype gravis).